The primary structure comprises 450 residues: Glucose-6-phosphate isomerase (450 aa).

The Proton donor role is filled by E291. Active-site residues include H312 and K426.

It belongs to the GPI family.

It localises to the cytoplasm. The catalysed reaction is alpha-D-glucose 6-phosphate = beta-D-fructose 6-phosphate. It participates in carbohydrate biosynthesis; gluconeogenesis. The protein operates within carbohydrate degradation; glycolysis; D-glyceraldehyde 3-phosphate and glycerone phosphate from D-glucose: step 2/4. Functionally, catalyzes the reversible isomerization of glucose-6-phosphate to fructose-6-phosphate. The chain is Glucose-6-phosphate isomerase from Clostridium perfringens (strain ATCC 13124 / DSM 756 / JCM 1290 / NCIMB 6125 / NCTC 8237 / Type A).